The primary structure comprises 417 residues: Gamma-glutamyl phosphate reductase (417 aa).

The protein belongs to the gamma-glutamyl phosphate reductase family.

It localises to the cytoplasm. The enzyme catalyses L-glutamate 5-semialdehyde + phosphate + NADP(+) = L-glutamyl 5-phosphate + NADPH + H(+). It functions in the pathway amino-acid biosynthesis; L-proline biosynthesis; L-glutamate 5-semialdehyde from L-glutamate: step 2/2. Functionally, catalyzes the NADPH-dependent reduction of L-glutamate 5-phosphate into L-glutamate 5-semialdehyde and phosphate. The product spontaneously undergoes cyclization to form 1-pyrroline-5-carboxylate. This chain is Gamma-glutamyl phosphate reductase, found in Escherichia coli (strain SMS-3-5 / SECEC).